We begin with the raw amino-acid sequence, 384 residues long: Conidiophore development protein hymA (384 aa).

Residues E362–S374 are compositionally biased toward basic and acidic residues. Positions E362–A384 are disordered.

Belongs to the Mo25 family.

Its subcellular location is the cytoplasm. Required for conidiophore development. The polypeptide is Conidiophore development protein hymA (hymA) (Emericella nidulans (strain FGSC A4 / ATCC 38163 / CBS 112.46 / NRRL 194 / M139) (Aspergillus nidulans)).